We begin with the raw amino-acid sequence, 390 residues long: MWITQLLGIRSGPPLGSHAWILIAIFQLAMDFIICESESPGKAYKHLQRPSLVRRVHKVALWSPTELLKLRNQKQFWNPINNEHPVLPIERKHYKTYHENLFFSRNVPLKYSTMKNSHYSSQQIKHTVKTTNLNRSKRQLQSRSWDNLKRFLDSGSQPTTVSEFILWGPTGDDDVESSTFPGIYETTRTSTVHARTTLLETTTTTTASTTTNVKVTTLQNPGIHNGKKSPGRISTTDPNPGNGKTARPPRIPNDTSGLAVHQIITITVSLIMVIAALITTLVLKNCCAQSGNARRNSHQRKINQQEESCQNLTDFTPASVPSNMDIFTAYNETLHCSHECIRTPVPVYTDEALHQTGAFKTTFNGNRPTSSDRHLIPVAFVSEKWFEISC.

The signal sequence occupies residues 1-37; it reads MWITQLLGIRSGPPLGSHAWILIAIFQLAMDFIICES. The Extracellular portion of the chain corresponds to 38–262; sequence ESPGKAYKHL…NDTSGLAVHQ (225 aa). Residues 218–253 form a disordered region; the sequence is LQNPGIHNGKKSPGRISTTDPNPGNGKTARPPRIPN. The helical transmembrane segment at 263 to 283 threads the bilayer; it reads IITITVSLIMVIAALITTLVL. The interval 283-390 is targeting signals; sequence LKNCCAQSGN…VSEKWFEISC (108 aa). Residues 284-390 lie on the Cytoplasmic side of the membrane; the sequence is KNCCAQSGNA…VSEKWFEISC (107 aa).

It localises to the basolateral cell membrane. Its subcellular location is the apical cell membrane. The protein resides in the cell junction. The protein localises to the adherens junction. Functionally, may play a role in cell adhesion and cell migration. The protein is Adherens junction-associated protein 1 (ajap1) of Xenopus tropicalis (Western clawed frog).